The sequence spans 199 residues: Inner membrane protein E199L (199 aa).

N-linked (GlcNAc...) asparagine; by host glycosylation is present at Asn-131. A helical membrane pass occupies residues 150-170 (INVMNHPFLTLILIILILIII).

It belongs to the asfivirus E199L family. In terms of assembly, interacts with host PYCR2; this interaction results in autophagy activation. In terms of processing, contains intramolecular disulfide bonds.

It localises to the virion membrane. The protein resides in the host membrane. In terms of biological role, essential for viral fusion with host endosomal membrane and core release. Not required for virus morphogenesis and egress. Induces complete autophagy through the interaction with and down-regulation of host PYCR2. The protein is Inner membrane protein E199L of African swine fever virus (isolate Tick/South Africa/Pretoriuskop Pr4/1996) (ASFV).